The following is a 228-amino-acid chain: uncharacterized protein (228 aa).

The 115-residue stretch at 5 to 119 folds into the Response regulatory domain; sequence HILIVEDEEK…ELLARIRAAL (115 aa). A 4-aspartylphosphate modification is found at aspartate 54. Positions 130 to 228 form a DNA-binding region, ompR/PhoB-type; that stretch reads GTFLTYDDLR…IRGVGYAIKG (99 aa).

In terms of processing, phosphorylated by YkoH.

It localises to the cytoplasm. In terms of biological role, probable member of the two-component regulatory system YkoH/YkoG. This is an uncharacterized protein from Bacillus subtilis (strain 168).